The chain runs to 236 residues: 2,3,4,5-tetrahydropyridine-2,6-dicarboxylate N-acetyltransferase (236 aa).

This sequence belongs to the transferase hexapeptide repeat family. DapH subfamily.

It carries out the reaction (S)-2,3,4,5-tetrahydrodipicolinate + acetyl-CoA + H2O = L-2-acetamido-6-oxoheptanedioate + CoA. The protein operates within amino-acid biosynthesis; L-lysine biosynthesis via DAP pathway; LL-2,6-diaminopimelate from (S)-tetrahydrodipicolinate (acetylase route): step 1/3. In terms of biological role, catalyzes the transfer of an acetyl group from acetyl-CoA to tetrahydrodipicolinate. This Clostridium botulinum (strain Loch Maree / Type A3) protein is 2,3,4,5-tetrahydropyridine-2,6-dicarboxylate N-acetyltransferase.